Consider the following 153-residue polypeptide: Transcription antitermination protein NusB (153 aa).

Belongs to the NusB family.

Functionally, involved in transcription antitermination. Required for transcription of ribosomal RNA (rRNA) genes. Binds specifically to the boxA antiterminator sequence of the ribosomal RNA (rrn) operons. This Clostridium tetani (strain Massachusetts / E88) protein is Transcription antitermination protein NusB.